The primary structure comprises 319 residues: tRNA uridine(34) hydroxylase (319 aa).

In terms of domain architecture, Rhodanese spans 123–221 (GDPDVVVIDT…YLETIPPEQS (99 aa)). Residue Cys-181 is the Cysteine persulfide intermediate of the active site. The interval 298–319 (ARQQVHIGASPEPKAMPATAGR) is disordered.

It belongs to the TrhO family.

It catalyses the reaction uridine(34) in tRNA + AH2 + O2 = 5-hydroxyuridine(34) in tRNA + A + H2O. Functionally, catalyzes oxygen-dependent 5-hydroxyuridine (ho5U) modification at position 34 in tRNAs. In Albidiferax ferrireducens (strain ATCC BAA-621 / DSM 15236 / T118) (Rhodoferax ferrireducens), this protein is tRNA uridine(34) hydroxylase.